The sequence spans 256 residues: Geranylgeranylglyceryl phosphate synthase (256 aa).

Mg(2+)-binding residues include aspartate 28 and serine 53. Sn-glycerol 1-phosphate-binding positions include tyrosine 172–glycine 178, glycine 203–glycine 204, and glycine 225–threonine 226.

It belongs to the GGGP/HepGP synthase family. Group II subfamily. Mg(2+) serves as cofactor.

Its subcellular location is the cytoplasm. It catalyses the reaction sn-glycerol 1-phosphate + (2E,6E,10E)-geranylgeranyl diphosphate = sn-3-O-(geranylgeranyl)glycerol 1-phosphate + diphosphate. Its pathway is membrane lipid metabolism; glycerophospholipid metabolism. In terms of biological role, prenyltransferase that catalyzes the transfer of the geranylgeranyl moiety of geranylgeranyl diphosphate (GGPP) to the C3 hydroxyl of sn-glycerol-1-phosphate (G1P). This reaction is the first ether-bond-formation step in the biosynthesis of archaeal membrane lipids. The sequence is that of Geranylgeranylglyceryl phosphate synthase from Methanococcus maripaludis (strain C5 / ATCC BAA-1333).